Consider the following 101-residue polypeptide: Small ribosomal subunit protein bS18c (101 aa).

The protein belongs to the bacterial ribosomal protein bS18 family. In terms of assembly, part of the 30S ribosomal subunit.

The protein localises to the plastid. It is found in the chloroplast. In Oenothera biennis (German evening primrose), this protein is Small ribosomal subunit protein bS18c.